A 360-amino-acid polypeptide reads, in one-letter code: Cyclin-dependent kinase 7 (360 aa).

The 285-residue stretch at 4-288 (YNIEALIGEG…AADALNHPYF (285 aa)) folds into the Protein kinase domain. Residues 10-18 (IGEGTYGVV) and K33 each bind ATP. D130 functions as the Proton acceptor in the catalytic mechanism. Phosphoserine is present on residues S157 and S163. The segment covering 333 to 342 (QQQQQQIQSQ) has biased composition (low complexity). Positions 333-360 (QQQQQQIQSQPEPIQVDNVEQTQQAQQV) are disordered. The span at 350-360 (NVEQTQQAQQV) shows a compositional bias: polar residues.

This sequence belongs to the protein kinase superfamily. CMGC Ser/Thr protein kinase family. CDC2/CDKX subfamily. In terms of assembly, probably associates with cyclin H and mat1 to form a multimeric active enzyme.

It is found in the nucleus. The catalysed reaction is L-seryl-[protein] + ATP = O-phospho-L-seryl-[protein] + ADP + H(+). The enzyme catalyses L-threonyl-[protein] + ATP = O-phospho-L-threonyl-[protein] + ADP + H(+). It carries out the reaction [DNA-directed RNA polymerase] + ATP = phospho-[DNA-directed RNA polymerase] + ADP + H(+). Its function is as follows. Catalytic part of CAK which activates cyclin-associated CDK1/CDK2/CDK4 by threonine phosphorylation, thereby allowing MPF activation. This chain is Cyclin-dependent kinase 7 (cdk7), found in Dictyostelium discoideum (Social amoeba).